Reading from the N-terminus, the 194-residue chain is dTTP/UTP pyrophosphatase (194 aa).

Asp66 serves as the catalytic Proton acceptor.

Belongs to the Maf family. YhdE subfamily. A divalent metal cation serves as cofactor.

The protein resides in the cytoplasm. It carries out the reaction dTTP + H2O = dTMP + diphosphate + H(+). It catalyses the reaction UTP + H2O = UMP + diphosphate + H(+). Functionally, nucleoside triphosphate pyrophosphatase that hydrolyzes dTTP and UTP. May have a dual role in cell division arrest and in preventing the incorporation of modified nucleotides into cellular nucleic acids. The polypeptide is dTTP/UTP pyrophosphatase (Anaeromyxobacter dehalogenans (strain 2CP-C)).